A 321-amino-acid chain; its full sequence is Endochitinase 1 (321 aa).

Residues 1-21 (MSFRALSVFSLFLSYLILGSA) form the signal peptide. The region spanning 22–64 (EQCGRQAGGALCPGGLCCSQFGWCGNTDDYCKKENGCQSQCSG) is the Chitin-binding type-1 domain. Cystine bridges form between cysteine 24-cysteine 39, cysteine 33-cysteine 45, cysteine 38-cysteine 52, cysteine 58-cysteine 62, cysteine 93-cysteine 156, cysteine 167-cysteine 175, and cysteine 274-cysteine 306. The tract at residues 65 to 98 (SGGDTGGLDSLITRERFDQMLLHRNDGGCPARGF) is hinge. A catalytic region spans residues 99–321 (YTYDAFIAAA…YNNGPSVDSM (223 aa)). Glutamate 137 (proton donor) is an active-site residue.

The protein belongs to the glycosyl hydrolase 19 family. Chitinase class I subfamily.

It is found in the vacuole. The catalysed reaction is Random endo-hydrolysis of N-acetyl-beta-D-glucosaminide (1-&gt;4)-beta-linkages in chitin and chitodextrins.. Defense against chitin-containing fungal pathogens. The protein is Endochitinase 1 (CHIA1) of Theobroma cacao (Cacao).